The chain runs to 943 residues: Synaptotagmin-like protein 2 (943 aa).

The RabBD domain maps to 1 to 57 (MIDLSFLTEEEQEAIMKVLQRDAALKRAEEERVRHLPEKVKDDQQLKNMSGQWFYEA). 3 disordered regions span residues 77–99 (RKKR…KESW), 118–291 (EEPE…VRFH), and 361–613 (ESDR…SNSG). Residues 82-99 (QVADEQSKDRANRAKESW) show a composition bias toward basic and acidic residues. The segment covering 125–138 (APASPSSSVVNPVS) has biased composition (low complexity). Residues 174-192 (SQQTKNEQSKNGKTGLFQT) are compositionally biased toward polar residues. The span at 194–205 (KEGELSESKEES) shows a compositional bias: basic and acidic residues. Polar residues-rich tracts occupy residues 382–394 (PQPS…LPFQ), 404–416 (KNET…SGSF), and 426–440 (EFLT…NSHT). Residues 524 to 537 (ELVRSAEDDQKADQ) show a composition bias toward basic and acidic residues. The span at 549 to 560 (STVSSQPDNQFS) shows a compositional bias: polar residues. Residues 603–613 (SSLTNLSSNSG) show a composition bias toward low complexity. C2 domains are found at residues 637–762 (VKGS…LKWY) and 777–906 (NRGE…VDWM).

As to quaternary structure, monomer. Binds NRXN1. Binds RAB27A that has been activated by GTP-binding via its N-terminus. Interacts with RAB27B.

It localises to the cell membrane. Functionally, may act as a RAB27A effector protein and play a role in cytotoxic granule exocytosis in lymphocytes. The sequence is that of Synaptotagmin-like protein 2 (SYTL2) from Bos taurus (Bovine).